Reading from the N-terminus, the 313-residue chain is Protein FixB (313 aa).

Position 255-283 (255-283 (LYLAVGISGQIQHMVGANASQTIFAINKD)) interacts with FAD.

The protein belongs to the ETF alpha-subunit/FixB family. In terms of assembly, heterodimer of FixA and FixB.

It participates in amine and polyamine metabolism; carnitine metabolism. Required for anaerobic carnitine reduction. May bring reductant to CaiA. This chain is Protein FixB, found in Escherichia coli O7:K1 (strain IAI39 / ExPEC).